Here is a 97-residue protein sequence, read N- to C-terminus: RxLR effector protein CRE10 (97 aa).

The N-terminal stretch at 1-21 (MRLSYILVVVIAVTLQACVCA) is a signal peptide. Residues 48–66 (RLLRGVKKRTAEREVQEER) carry the RxLR-dEER motif.

Belongs to the RxLR effector family.

It localises to the secreted. The protein resides in the host cell. Effector that is involved in host plant infection. Contributes to virulence during the early infection stage, by inhibiting plant defense responses induced by both PAMP-triggered immunity (PTI) and effector-triggered immunity (ETI). The chain is RxLR effector protein CRE10 from Phytophthora infestans (strain T30-4) (Potato late blight agent).